The chain runs to 358 residues: MLDKIRFTVLLDRPFYQPGQTIQGHVVCEPHHPLEIDCVEGRLHGEIQYFQQLPPNHNRNGSPLPPSKTRVLIDEKAQLWKYQTVSEMLGLDVFYDENQNRHFSSESASASSSSLFTTAATFPIQIELPHFAPPSFYCPGSPVSIRFTLEIQLYNQGFKIASHEENLVVLNYESIKRQVTPKPVNFQKTFNFPKERSISLEMLLPTDVFTTTARLENCITICNRWKQSLKYVHLNIVRRISALNQNNEVIDTVKIDTTGVGLPSKTKIAVGETYSFRPTFNVPALPPNIHVNGLFKTEYSLKVTIGRAHNFVLASYEVPITIVTMDQSSRRSMQKEDILVDISASNNTLNNLPVDLLA.

It belongs to the arrestin family.

In terms of biological role, involved in resistance to B.thuringiensis pore-forming toxin Cry5B downstream of the sek-1 and pmk-1 MAPK kinase pathway. The sequence is that of Protein ttm-2 from Caenorhabditis elegans.